The sequence spans 180 residues: ATP-dependent protease subunit HslV (180 aa).

Thr-6 is a catalytic residue. 3 residues coordinate Na(+): Ala-164, Cys-167, and Thr-170.

The protein belongs to the peptidase T1B family. HslV subfamily. A double ring-shaped homohexamer of HslV is capped on each side by a ring-shaped HslU homohexamer. The assembly of the HslU/HslV complex is dependent on binding of ATP.

The protein resides in the cytoplasm. The catalysed reaction is ATP-dependent cleavage of peptide bonds with broad specificity.. Its activity is regulated as follows. Allosterically activated by HslU binding. Its function is as follows. Protease subunit of a proteasome-like degradation complex believed to be a general protein degrading machinery. This chain is ATP-dependent protease subunit HslV, found in Borrelia recurrentis (strain A1).